The following is a 182-amino-acid chain: Testis-expressed protein 29 (182 aa).

The Extracellular portion of the chain corresponds to 1–56; it reads MRYTTDIKKSPPQLLKTFAVCDISLYDICDYNVTRDQCKELGCCFYKGVCYKKVVP. A helical membrane pass occupies residues 57-77; it reads IYVQMFSTLIVLVTGIIIITI. At 78 to 182 the chain is on the cytoplasmic side; the sequence is IYRIVQEIKR…PPTDPSENPP (105 aa). A disordered region spans residues 91–182; sequence LSMNSTPKAS…PPTDPSENPP (92 aa). Over residues 115 to 170 the composition is skewed to low complexity; that stretch reads RAPSRSPSRTSSTLSSRSPTTAPTTAPTTDPATDPATDPATDPATDPATDPATDPA. Over residues 171–182 the composition is skewed to pro residues; it reads TAPPTDPSENPP.

It localises to the membrane. This Rattus norvegicus (Rat) protein is Testis-expressed protein 29 (Tex29).